The primary structure comprises 635 residues: Protein MICRORCHIDIA 1 (635 aa).

The tract at residues 491–511 is disordered; it reads RTVIPDQPPTVNTYNPSPLPS. The stretch at 588 to 635 forms a coiled coil; that stretch reads MRCEEYVKKENEVEQTVKSLEKELEEIKSKCAQLALLVDAKKKEMQQV.

It belongs to the MORC ATPase protein family. Homodimer and heterodimer with MORC6. Component of an RNA-directed DNA methylation (RdDM) complex that contains at least MORC6, MORC1/CRT1, MORC2, SWI3D and SUVH9. Binds directly to SUVH2 and SUVH9. Interacts with the resistance proteins RCY1, RPM1, SNC1, RPP8, SSI4 and RPS2. The interactions with various resistance proteins are disrupted when these resistance proteins are activated. Interacts with the PAMP recognition receptor FLS2. Mg(2+) is required as a cofactor. It depends on Mn(2+) as a cofactor. As to expression, expressed constitutively.

Its subcellular location is the nucleus. The protein localises to the endosome. Functionally, mediator of defense signaling triggered by distinct classes of R proteins. Required during hypersensitive response (HR) that confers disease resistance to turnip crinkle virus (TCV). Exhibits ATPase activity. Contributes to resistance against Pseudomonas syringae and Hyaloperonospora arabidopsidis, at early stages prior to cytosolic calcium ions Ca(2+) accumulation. Required for pathogen-associated molecular pattern (PAMP)-triggered immunity (PTI), basal resistance, non-host resistance and systemic acquired resistance (SAR). Binds DNA/RNA in a non-specific manner and exhibits endonuclease activity. Probably involved in DNA repair. Required for both RPP8- and SSI4-mediated resistance responses, thus being involved in both TIR- and CC-NB-LRR pathways. Involved in RNA-directed DNA methylation (RdDM) as a component of the RdDM machinery and required for gene silencing. May also be involved in the regulation of chromatin architecture to maintain gene silencing. This chain is Protein MICRORCHIDIA 1, found in Arabidopsis thaliana (Mouse-ear cress).